We begin with the raw amino-acid sequence, 483 residues long: Regulatory protein ViaA (483 aa).

The protein belongs to the ViaA family. In terms of assembly, homodimer. Interacts with RavA.

It localises to the cytoplasm. In terms of biological role, component of the RavA-ViaA chaperone complex, which may act on the membrane to optimize the function of some of the respiratory chains. ViaA stimulates the ATPase activity of RavA. The polypeptide is Regulatory protein ViaA (Escherichia coli O7:K1 (strain IAI39 / ExPEC)).